Reading from the N-terminus, the 515-residue chain is Leucine-rich repeat transmembrane neuronal protein 2 (515 aa).

The N-terminal stretch at 1-33 (MGLHFKWPLGAPMLAAIYAMSVVLKMLPALGMA) is a signal peptide. Residues 34-61 (CPPKCRCEKLLFYCDSQGFHSVPNATDK) enclose the LRRNT domain. Residues 34 to 421 (CPPKCRCEKL…EPDNAIFTQR (388 aa)) are Extracellular-facing. The N-linked (GlcNAc...) asparagine glycan is linked to asparagine 57. LRR repeat units lie at residues 63 to 83 (SLGLSLRHNHITALERDQFAS), 86 to 107 (QLTWLHLDHNQISTVKEDAFQG), 110 to 131 (KLKELILSSNKIFYLPNTTFTQ), 134 to 155 (NLQNLDLSFNQLSSLHPELFYG), 158 to 179 (KLQTLHLRSNSLRTIPVRLFWD), 182 to 203 (SLEFLDLSTNRLRSLARNGFAG), 206 to 227 (KLRELHLEHNQLTKINFAHFLR), 230 to 251 (SLHTLFLQWNKISNLTCGMDWT), 254 to 275 (TLEKLDLTGNEIKAIDLTVFET), and 278 to 299 (NLKILLMDNNKLNSLDSKILNS). The N-linked (GlcNAc...) asparagine glycan is linked to asparagine 126. Residue asparagine 243 is glycosylated (N-linked (GlcNAc...) asparagine). Residues 311–362 (NLWECSPRVCALASWLGSFQGRWEHSILCHSPDHTQGEDILDAVHGFQLCWN) enclose the LRRCT domain. Asparagine 362 is a glycosylation site (N-linked (GlcNAc...) asparagine). A helical membrane pass occupies residues 422–442 (VITGTMALLFSFFFIIFIVFI). The Cytoplasmic portion of the chain corresponds to 443–515 (SRKCCPPTLR…QQLPYKECEV (73 aa)). The Involved in DLG4-binding signature appears at 512–515 (ECEV).

It belongs to the LRRTM family. In terms of assembly, interacts with DLG4. Interacts with neurexin NRXN1; interaction is mediated by heparan sulfate glycan modification on neurexin. As to expression, expressed in neuronal tissues.

The protein resides in the cell membrane. The protein localises to the postsynaptic cell membrane. Involved in the development and maintenance of excitatory synapses in the vertebrate nervous system. Regulates surface expression of AMPA receptors and instructs the development of functional glutamate release sites. Acts as a ligand for the presynaptic receptors NRXN1-A and NRXN1-B. This chain is Leucine-rich repeat transmembrane neuronal protein 2 (Lrrtm2), found in Mus musculus (Mouse).